Consider the following 425-residue polypeptide: Succinyl-diaminopimelate desuccinylase (425 aa).

A Zn(2+)-binding site is contributed by His96. Residue Asp98 is part of the active site. Asp129 contributes to the Zn(2+) binding site. Catalysis depends on Glu163, which acts as the Proton acceptor. The Zn(2+) site is built by Glu164, Glu192, and His378.

Belongs to the peptidase M20A family. DapE subfamily. In terms of assembly, homodimer. The cofactor is Zn(2+). Co(2+) is required as a cofactor.

The enzyme catalyses N-succinyl-(2S,6S)-2,6-diaminopimelate + H2O = (2S,6S)-2,6-diaminopimelate + succinate. Its pathway is amino-acid biosynthesis; L-lysine biosynthesis via DAP pathway; LL-2,6-diaminopimelate from (S)-tetrahydrodipicolinate (succinylase route): step 3/3. In terms of biological role, catalyzes the hydrolysis of N-succinyl-L,L-diaminopimelic acid (SDAP), forming succinate and LL-2,6-diaminopimelate (DAP), an intermediate involved in the bacterial biosynthesis of lysine and meso-diaminopimelic acid, an essential component of bacterial cell walls. This chain is Succinyl-diaminopimelate desuccinylase, found in Polaromonas sp. (strain JS666 / ATCC BAA-500).